Reading from the N-terminus, the 66-residue chain is Protein translocase subunit SecE (66 aa).

The helical transmembrane segment at 29–49 threads the bilayer; that stretch reads LVASTLVVVVAVFIFSLICLV.

This sequence belongs to the SecE/SEC61-gamma family. As to quaternary structure, component of the Sec protein translocase complex. Heterotrimer consisting of SecY, SecE and SecG subunits. The heterotrimers can form oligomers, although 1 heterotrimer is thought to be able to translocate proteins. Interacts with the ribosome. Interacts with SecDF, and other proteins may be involved. Interacts with SecA.

Its subcellular location is the cell inner membrane. Its function is as follows. Essential subunit of the Sec protein translocation channel SecYEG. Clamps together the 2 halves of SecY. May contact the channel plug during translocation. This is Protein translocase subunit SecE from Rickettsia felis (strain ATCC VR-1525 / URRWXCal2) (Rickettsia azadi).